The chain runs to 262 residues: Troponin T, slow skeletal muscle (262 aa).

Positions Met-1 to Pro-31 are enriched in acidic residues. 3 disordered regions span residues Met-1–Glu-59, Arg-107–Val-153, and Leu-165–His-197. A Phosphoserine; by CK2 modification is found at Ser-2. Residues Val-32–Lys-41 show a composition bias toward basic and acidic residues. Residues Ser-43–Ile-55 are compositionally biased toward pro residues. 2 stretches are compositionally biased toward basic and acidic residues: residues Arg-107 to Lys-149 and Thr-177 to His-197.

The protein belongs to the troponin T family. In terms of assembly, interacts with TPM3.

Its function is as follows. Troponin T is the tropomyosin-binding subunit of troponin, the thin filament regulatory complex which confers calcium-sensitivity to striated muscle actomyosin ATPase activity. The polypeptide is Troponin T, slow skeletal muscle (TNNT1) (Sus scrofa (Pig)).